We begin with the raw amino-acid sequence, 133 residues long: Putative pre-16S rRNA nuclease (133 aa).

This sequence belongs to the YqgF nuclease family.

The protein resides in the cytoplasm. In terms of biological role, could be a nuclease involved in processing of the 5'-end of pre-16S rRNA. This is Putative pre-16S rRNA nuclease from Bordetella pertussis (strain Tohama I / ATCC BAA-589 / NCTC 13251).